A 596-amino-acid chain; its full sequence is Elongation factor 4 (596 aa).

The region spanning 2–184 is the tr-type G domain; the sequence is KHIRNFSIIA…VIVAKIPPPE (183 aa). GTP is bound by residues 14 to 19 and 131 to 134; these read DHGKST and NKID.

This sequence belongs to the TRAFAC class translation factor GTPase superfamily. Classic translation factor GTPase family. LepA subfamily.

It is found in the cell inner membrane. It carries out the reaction GTP + H2O = GDP + phosphate + H(+). Required for accurate and efficient protein synthesis under certain stress conditions. May act as a fidelity factor of the translation reaction, by catalyzing a one-codon backward translocation of tRNAs on improperly translocated ribosomes. Back-translocation proceeds from a post-translocation (POST) complex to a pre-translocation (PRE) complex, thus giving elongation factor G a second chance to translocate the tRNAs correctly. Binds to ribosomes in a GTP-dependent manner. The protein is Elongation factor 4 of Shewanella putrefaciens (strain CN-32 / ATCC BAA-453).